A 90-amino-acid chain; its full sequence is Small ribosomal subunit protein bS16 (90 aa).

Belongs to the bacterial ribosomal protein bS16 family.

This Bacillus anthracis (strain A0248) protein is Small ribosomal subunit protein bS16.